Consider the following 172-residue polypeptide: Diphosphoinositol polyphosphate phosphohydrolase 1 (172 aa).

Met-1 is modified (N-acetylmethionine). Substrate is bound by residues Arg-10, 18–20 (KKR), and 39–41 (SSR). The 128-residue stretch at 17–144 (YKKRAACLCF…VQASYFETLR (128 aa)) folds into the Nudix hydrolase domain. Mg(2+) is bound by residues Gly-50 and Glu-66. The Nudix box signature appears at 51–72 (GGMEPEEEPGTAAVREVCEEAG). Catalysis depends on Glu-69, which acts as the Proton acceptor. Glu-70 is a binding site for Mg(2+). Residues 89-91 (RKH), Arg-115, and Lys-133 each bind substrate.

It belongs to the Nudix hydrolase family. DIPP subfamily. In terms of assembly, monomer. Mg(2+) is required as a cofactor. It depends on Mn(2+) as a cofactor. Zn(2+) serves as cofactor.

The protein localises to the cytoplasm. The protein resides in the nucleus. It catalyses the reaction diphospho-myo-inositol polyphosphate + H2O = myo-inositol polyphosphate + phosphate.. The catalysed reaction is 5-diphospho-1D-myo-inositol 1,2,3,4,6-pentakisphosphate + H2O = 1D-myo-inositol hexakisphosphate + phosphate + H(+). The enzyme catalyses 3,5-bis(diphospho)-1D-myo-inositol 1,2,4,6-tetrakisphosphate + H2O = 3-diphospho-1D-myo-inositol 1,2,4,5,6-pentakisphosphate + phosphate + 2 H(+). It carries out the reaction [phosphate](n+1) + n H2O = (n+1) phosphate + n H(+). It catalyses the reaction P(1),P(5)-bis(5'-adenosyl) pentaphosphate + H2O = ADP + ATP + 2 H(+). The catalysed reaction is P(1),P(6)-bis(5'-adenosyl) hexaphosphate + H2O = 2 ATP + 2 H(+). The enzyme catalyses P(1),P(4)-bis(5'-adenosyl) tetraphosphate + H2O = AMP + ATP + 2 H(+). It carries out the reaction a 5'-end (N(7)-methyl 5'-triphosphoguanosine)-ribonucleoside in mRNA + H2O = N(7)-methyl-GMP + a 5'-end diphospho-ribonucleoside in mRNA + 2 H(+). It catalyses the reaction a 5'-end (N(7)-methyl 5'-triphosphoguanosine)-ribonucleoside in mRNA + H2O = N(7)-methyl-GDP + a 5'-end phospho-ribonucleoside in mRNA + 2 H(+). In terms of biological role, cleaves a beta-phosphate from the diphosphate groups in PP-InsP5 (diphosphoinositol pentakisphosphate) and [PP]2-InsP4 (bisdiphosphoinositol tetrakisphosphate), suggesting that it may play a role in signal transduction. InsP6 (inositol hexakisphosphate) is not a substrate. Also able to catalyze the hydrolysis of dinucleoside oligophosphates, with diadenosine 5',5'''-P1,P6-hexaphosphate (Ap6A) and diadenosine 5',5'''- P1,P5-pentaphosphate (Ap5A) being the preferred substrates. The major reaction products are ADP and p4a from Ap6A and ADP and ATP from Ap5A. Also able to hydrolyze 5- phosphoribose 1-diphosphate. Acts as a decapping enzyme that can hydrolyze both monomethylated and unmethylated capped RNAs. Hydrolyzes monomethylated capped RNA after both the alpha- and beta-phosphates generating m7GMP + ppRNA and m7GDP + pRNA. Modulates the stability of a subset of mRNAs implicated in cell motility. Divalent cations zinc, magnesium and manganese determine its substrate specificity. Exhibits diphosphoinositol polyphosphate phosphohydrolase in the presence of magnesium ions, diadenosine hexaphosphate hydrolase activity in the presence of manganese ions and endopolyphosphatase activity in the presence of zinc ions. Plays an important role in limiting DNA damage and maintaining cell survival upon oxidative stress via its endopolyphosphatase activity. The protein is Diphosphoinositol polyphosphate phosphohydrolase 1 of Bos taurus (Bovine).